A 405-amino-acid chain; its full sequence is 4-hydroxy-3-methylbut-2-en-1-yl diphosphate synthase (flavodoxin) (405 aa).

[4Fe-4S] cluster-binding residues include Cys-297, Cys-300, Cys-343, and Glu-350.

Belongs to the IspG family. The cofactor is [4Fe-4S] cluster.

It catalyses the reaction (2E)-4-hydroxy-3-methylbut-2-enyl diphosphate + oxidized [flavodoxin] + H2O + 2 H(+) = 2-C-methyl-D-erythritol 2,4-cyclic diphosphate + reduced [flavodoxin]. The protein operates within isoprenoid biosynthesis; isopentenyl diphosphate biosynthesis via DXP pathway; isopentenyl diphosphate from 1-deoxy-D-xylulose 5-phosphate: step 5/6. Its function is as follows. Converts 2C-methyl-D-erythritol 2,4-cyclodiphosphate (ME-2,4cPP) into 1-hydroxy-2-methyl-2-(E)-butenyl 4-diphosphate. In Francisella tularensis subsp. novicida (strain U112), this protein is 4-hydroxy-3-methylbut-2-en-1-yl diphosphate synthase (flavodoxin).